The chain runs to 320 residues: Putative polysaccharide deacetylase (320 aa).

Positions 69 to 303 constitute a NodB homology domain; that stretch reads RSIESCFEYG…ITSKEGVWVA (235 aa).

The protein belongs to the polysaccharide deacetylase family. In terms of assembly, homodimer.

The protein resides in the prospore. May deacetylate chitin. Required for spore formation. The protein is Putative polysaccharide deacetylase of Schizosaccharomyces pombe (strain 972 / ATCC 24843) (Fission yeast).